We begin with the raw amino-acid sequence, 246 residues long: B-cell receptor-associated protein 31 (246 aa).

Over 2–6 the chain is Lumenal; sequence SLQWT. The chain crosses the membrane as a helical span at residues 7 to 27; that stretch reads AVATFLYAEVFVVLLLCIPFI. Residues 28–43 lie on the Cytoplasmic side of the membrane; it reads SPKRWQKIFKSRLVEL. A helical membrane pass occupies residues 44 to 64; it reads LVSYGNTFFVVLIVILVLLVI. The Lumenal portion of the chain corresponds to 65–102; the sequence is DAVREIRKYDDVTEKVNLQNNPGAMEHFHMKLFRAQRN. A helical membrane pass occupies residues 103-123; that stretch reads LYIAGFSLLLSFLLRRLVTLI. Over 124–246 the chain is Cytoplasmic; sequence SQQATLLASN…VDGPMDKKEE (123 aa). The stretch at 165 to 237 forms a coiled coil; that stretch reads GGKLDVGNAE…EEHAKLQAAV (73 aa). The Di-lysine motif signature appears at 243-246; that stretch reads KKEE.

Belongs to the BCAP29/BCAP31 family. In terms of assembly, homodimer and heterodimer with BCAP29. Binds CASP8 (isoform 9) as a complex containing BCAP31, BCAP29, BCL2 and/or BCL2L1. Forms a complex (via C-terminus) with TOMM40 which mediates the translocation of components of the mitochondrial membrane respiratory chain NADH dehydrogenase (Complex I) from the cytosol to the mitochondria; within the complex BCAP31 interacts directly with unprocessed and processed NDUFS4 and NDUFB11. Interacts with VDAC1. Interacts with VAMP3, VAMP1 and membrane IgD immunoglobulins. Interacts with HACD2. Interacts with DNM1L; may form part of a larger protein complex at the endoplasmic reticulum-mitochondrial interface during mitochondrial fission. (Microbial infection) Interacts (via C-terminus) with HRSV membrane protein SH; this interaction is direct. In terms of processing, cleaved by CASP8 and other caspases. In terms of tissue distribution, ubiquitous. Highly expressed in neurons and discrete endocrine cells.

It is found in the endoplasmic reticulum membrane. It localises to the endoplasmic reticulum-Golgi intermediate compartment membrane. Its function is as follows. Functions as a chaperone protein. Is one of the most abundant endoplasmic reticulum (ER) proteins. Plays a role in the export of secreted proteins in the ER, the recognition of abnormally folded protein and their targeting to the ER associated-degradation (ERAD). Also serves as a cargo receptor for the export of transmembrane proteins. Plays a role in the assembly of the mitochondrial membrane respiratory chain NADH dehydrogenase (Complex I) by stimulating the translocation of NDUFS4 and NDUFB11 from the cytosol to the mitochondria via interaction with TOMM40. In response to ER stress, delocalizes from the ER-mitochondria contact sites and binds BCL2. May be involved in CASP8-mediated apoptosis. In Homo sapiens (Human), this protein is B-cell receptor-associated protein 31.